The sequence spans 346 residues: Carbamoyl phosphate synthase small chain (346 aa).

The interval 1-160 is CPSase; the sequence is MEDGSVFAGR…SVKEPVLLGE (160 aa). The L-glutamine site is built by serine 39, glycine 209, and glycine 211. The region spanning 164–346 is the Glutamine amidotransferase type-1 domain; it reads CIGVVDCGVK…FLKLVERHGH (183 aa). Residue cysteine 237 is the Nucleophile of the active site. L-glutamine contacts are provided by leucine 238, glutamine 241, asparagine 280, glycine 282, and tyrosine 283. Catalysis depends on residues histidine 320 and glutamate 322.

The protein belongs to the CarA family. Composed of two chains; the small (or glutamine) chain promotes the hydrolysis of glutamine to ammonia, which is used by the large (or ammonia) chain to synthesize carbamoyl phosphate. Tetramer of heterodimers (alpha,beta)4.

It catalyses the reaction hydrogencarbonate + L-glutamine + 2 ATP + H2O = carbamoyl phosphate + L-glutamate + 2 ADP + phosphate + 2 H(+). It carries out the reaction L-glutamine + H2O = L-glutamate + NH4(+). It participates in amino-acid biosynthesis; L-arginine biosynthesis; carbamoyl phosphate from bicarbonate: step 1/1. Its pathway is pyrimidine metabolism; UMP biosynthesis via de novo pathway; (S)-dihydroorotate from bicarbonate: step 1/3. Small subunit of the glutamine-dependent carbamoyl phosphate synthetase (CPSase). CPSase catalyzes the formation of carbamoyl phosphate from the ammonia moiety of glutamine, carbonate, and phosphate donated by ATP, constituting the first step of 2 biosynthetic pathways, one leading to arginine and/or urea and the other to pyrimidine nucleotides. The small subunit (glutamine amidotransferase) binds and cleaves glutamine to supply the large subunit with the substrate ammonia. The chain is Carbamoyl phosphate synthase small chain from Pyrobaculum aerophilum (strain ATCC 51768 / DSM 7523 / JCM 9630 / CIP 104966 / NBRC 100827 / IM2).